The sequence spans 220 residues: Eukaryotic translation initiation factor 3 subunit B (220 aa).

The sufficient for interaction with HCR1 and TIF32 stretch occupies residues 1 to 94 (MPEPIAFDES…LIIELDSAAA (94 aa)). The tract at residues 1–220 (MPEPIAFDES…GVQAWGGERI (220 aa)) is sufficient for interaction with PIC8. The RRM domain occupies 37-120 (HFVICDGAPI…HRLAVNKLPD (84 aa)).

The protein belongs to the eIF-3 subunit B family. In terms of assembly, component of the eukaryotic translation initiation factor 3 (eIF-3) complex.

Its subcellular location is the cytoplasm. In terms of biological role, RNA-binding component of the eukaryotic translation initiation factor 3 (eIF-3) complex, which is involved in protein synthesis of a specialized repertoire of mRNAs and, together with other initiation factors, stimulates binding of mRNA and methionyl-tRNAi to the 40S ribosome. The eIF-3 complex specifically targets and initiates translation of a subset of mRNAs involved in cell proliferation. The protein is Eukaryotic translation initiation factor 3 subunit B (TIF32) of Pichia angusta (Yeast).